Reading from the N-terminus, the 311-residue chain is Malate dehydrogenase (311 aa).

NAD(+) contacts are provided by residues 7 to 13 (GAAGGIG) and D34. Substrate is bound by residues R81 and R87. Residues N94 and 117–119 (ITN) contribute to the NAD(+) site. Substrate-binding residues include N119 and R153. The active-site Proton acceptor is H177. Residue M227 participates in NAD(+) binding.

It belongs to the LDH/MDH superfamily. MDH type 1 family. As to quaternary structure, homodimer.

The catalysed reaction is (S)-malate + NAD(+) = oxaloacetate + NADH + H(+). In terms of biological role, catalyzes the reversible oxidation of malate to oxaloacetate. This chain is Malate dehydrogenase, found in Shewanella baltica (strain OS155 / ATCC BAA-1091).